A 791-amino-acid polypeptide reads, in one-letter code: uncharacterized protein (791 aa).

The next 4 membrane-spanning stretches (helical) occupy residues 104-124 (MWILAFGLATVIAGVDAFFLM), 131-151 (IAAIVALLVAYPLGQLWYYII), 177-197 (ACLYIFVNICVSAKLVNTLII), and 226-246 (WSGLALPILVYPPTLIWPSVL). N-linked (GlcNAc...) asparagine glycosylation is present at N265. The next 8 helical transmembrane spans lie at 274-294 (FFIVFVASFIWYWFPDLIFPA), 309-329 (SAVLSQIFGVKTGLGLFPLTL), 346-366 (WATCCIFTSFVFWIWIVLPGL), 421-441 (FIINIALSLGAFSSMMISFFL), 471-491 (VHWGFYLASIIVSLGLGFAFT), 501-521 (SYGFVVSMVIGAALYIPLSLI), 533-553 (AFFEIVAAFWFNGQPMALLYF), and 583-603 (LVAALLFTSGIWSSLVNSAVT). N621 is a glycosylation site (N-linked (GlcNAc...) asparagine). A run of 3 helical transmembrane segments spans residues 653–673 (FVMWFFLVGAVVSVVVYLLQI), 697–717 (SVTGINYSTWAAVAFCFNYLI), and 733–753 (AAAMDCGVAIAGLFIYFCVVY). The N-linked (GlcNAc...) asparagine glycan is linked to N759.

This sequence belongs to the oligopeptide OPT transporter family.

It is found in the membrane. This is an uncharacterized protein from Schizosaccharomyces pombe (strain 972 / ATCC 24843) (Fission yeast).